Reading from the N-terminus, the 475-residue chain is Bifunctional protein HldE (475 aa).

The ribokinase stretch occupies residues 1–318 (MKVTLPDFER…ENAVRGRAET (318 aa)). 195 to 198 (NLSE) contributes to the ATP binding site. D264 is a catalytic residue. A cytidylyltransferase region spans residues 344-475 (MTNGVFDILH…NIIKKIQKNS (132 aa)).

The protein in the N-terminal section; belongs to the carbohydrate kinase PfkB family. In the C-terminal section; belongs to the cytidylyltransferase family. In terms of assembly, homodimer.

It catalyses the reaction D-glycero-beta-D-manno-heptose 7-phosphate + ATP = D-glycero-beta-D-manno-heptose 1,7-bisphosphate + ADP + H(+). The catalysed reaction is D-glycero-beta-D-manno-heptose 1-phosphate + ATP + H(+) = ADP-D-glycero-beta-D-manno-heptose + diphosphate. The protein operates within nucleotide-sugar biosynthesis; ADP-L-glycero-beta-D-manno-heptose biosynthesis; ADP-L-glycero-beta-D-manno-heptose from D-glycero-beta-D-manno-heptose 7-phosphate: step 1/4. It functions in the pathway nucleotide-sugar biosynthesis; ADP-L-glycero-beta-D-manno-heptose biosynthesis; ADP-L-glycero-beta-D-manno-heptose from D-glycero-beta-D-manno-heptose 7-phosphate: step 3/4. Catalyzes the phosphorylation of D-glycero-D-manno-heptose 7-phosphate at the C-1 position to selectively form D-glycero-beta-D-manno-heptose-1,7-bisphosphate. Its function is as follows. Catalyzes the ADP transfer from ATP to D-glycero-beta-D-manno-heptose 1-phosphate, yielding ADP-D-glycero-beta-D-manno-heptose. This chain is Bifunctional protein HldE, found in Cronobacter sakazakii (strain ATCC BAA-894) (Enterobacter sakazakii).